The following is a 37-amino-acid chain: Potassium channel toxin alpha-KTx 11.1 (37 aa).

Cystine bridges form between cysteine 8–cysteine 27, cysteine 13–cysteine 33, and cysteine 17–cysteine 35.

It belongs to the short scorpion toxin superfamily. Potassium channel inhibitor family. Alpha-KTx 11 subfamily. In terms of tissue distribution, expressed by the venom gland.

Its subcellular location is the secreted. Its function is as follows. Binds and inhibits voltage-sensitive potassium channels. Inhibits the vertebrate potassium channels Kv1.1/KCNA1, Kv1.2/KCNA2 and Kv1.3/KCNA3 with low affinity. Also weakly inhibits Kv7.1/KCNQ1 (10 uM of the toxin inhibits currents by 21.43%). The sequence is that of Potassium channel toxin alpha-KTx 11.1 from Parabuthus villosus (Black hairy thick-tailed scorpion).